Consider the following 255-residue polypeptide: Small ribosomal subunit protein uS2 (255 aa).

Belongs to the universal ribosomal protein uS2 family.

This chain is Small ribosomal subunit protein uS2, found in Geotalea daltonii (strain DSM 22248 / JCM 15807 / FRC-32) (Geobacter daltonii).